A 334-amino-acid polypeptide reads, in one-letter code: Heat-inducible transcription repressor HrcA (334 aa).

This sequence belongs to the HrcA family.

Negative regulator of class I heat shock genes (grpE-dnaK-dnaJ and groELS operons). Prevents heat-shock induction of these operons. The polypeptide is Heat-inducible transcription repressor HrcA (Acidovorax ebreus (strain TPSY) (Diaphorobacter sp. (strain TPSY))).